Here is a 3218-residue protein sequence, read N- to C-terminus: Serine/threonine-protein kinase Smg1 (3218 aa).

Positions 32 to 78 (LNNNGNHGDSSNEGGGGNGSGRGGATGSGNIAGLGGSESMWSPGGGK) are disordered. Residues 33–43 (NNNGNHGDSSN) are compositionally biased toward low complexity. Over residues 44-67 (EGGGGNGSGRGGATGSGNIAGLGG) the composition is skewed to gly residues. Ser-70 carries the phosphoserine modification. The 404-residue stretch at 1289 to 1692 (DAAAAAREEG…IFPAVVGANR (404 aa)) folds into the FAT domain. The stretch at 1643-1678 (APWKVIIPQLFSRLNHHEPYVRKSVCDLLCRLAKSR) is one HEAT repeat. Positions 1897-2232 (VESSVCVLPT…LGVGDLKYHK (336 aa)) constitute a PI3K/PI4K catalytic domain. Residues 1903-1909 (VLPTKTK) form a G-loop region. Positions 2101-2109 (GLGDRHLDN) are catalytic loop. Positions 2121 to 2145 (HIDYNVCFEKGRTLRIPEKVPFRLT) are activation loop. Positions 3186–3218 (QRSTVAEQVDYVIREACNPENLAVLYEGWTPWV) constitute an FATC domain.

This sequence belongs to the PI3/PI4-kinase family. As to quaternary structure, component of a post-splicing multiprotein NMD complex. Mn(2+) is required as a cofactor.

The protein resides in the cytoplasm. It carries out the reaction L-seryl-[protein] + ATP = O-phospho-L-seryl-[protein] + ADP + H(+). It catalyses the reaction L-threonyl-[protein] + ATP = O-phospho-L-threonyl-[protein] + ADP + H(+). In terms of biological role, serine/threonine protein kinase involved in mRNA surveillance. Recognizes the substrate consensus sequence [ST]-Q. Involved in nonsense-mediated decay (NMD) of mRNAs containing premature stop codons, probably by phosphorylating Upf1. The sequence is that of Serine/threonine-protein kinase Smg1 (nonC) from Drosophila melanogaster (Fruit fly).